The following is a 189-amino-acid chain: Probable nicotinate-nucleotide adenylyltransferase (189 aa).

The protein belongs to the NadD family.

It catalyses the reaction nicotinate beta-D-ribonucleotide + ATP + H(+) = deamido-NAD(+) + diphosphate. Its pathway is cofactor biosynthesis; NAD(+) biosynthesis; deamido-NAD(+) from nicotinate D-ribonucleotide: step 1/1. In terms of biological role, catalyzes the reversible adenylation of nicotinate mononucleotide (NaMN) to nicotinic acid adenine dinucleotide (NaAD). The sequence is that of Probable nicotinate-nucleotide adenylyltransferase from Ruegeria sp. (strain TM1040) (Silicibacter sp.).